The primary structure comprises 363 residues: 3-isopropylmalate dehydrogenase (363 aa).

Residue 78–89 coordinates NAD(+); sequence GPKWGTGAVRPE. Positions 96, 106, 135, and 224 each coordinate substrate. 3 residues coordinate Mg(2+): aspartate 224, aspartate 249, and aspartate 253. Position 288 to 299 (288 to 299) interacts with NAD(+); that stretch reads GSAPDLPANKVN.

This sequence belongs to the isocitrate and isopropylmalate dehydrogenases family. As to quaternary structure, homodimer. Mg(2+) is required as a cofactor. The cofactor is Mn(2+).

It is found in the cytoplasm. The enzyme catalyses (2R,3S)-3-isopropylmalate + NAD(+) = 4-methyl-2-oxopentanoate + CO2 + NADH. It participates in amino-acid biosynthesis; L-leucine biosynthesis; L-leucine from 3-methyl-2-oxobutanoate: step 3/4. Its function is as follows. Catalyzes the oxidation of 3-carboxy-2-hydroxy-4-methylpentanoate (3-isopropylmalate) to 3-carboxy-4-methyl-2-oxopentanoate. The product decarboxylates to 4-methyl-2 oxopentanoate. The chain is 3-isopropylmalate dehydrogenase (LEU2) from Cyberlindnera jadinii (Torula yeast).